We begin with the raw amino-acid sequence, 305 residues long: UDP-3-O-acyl-N-acetylglucosamine deacetylase (305 aa).

Zn(2+) is bound by residues His-79, His-238, and Asp-242. His-265 (proton donor) is an active-site residue.

Belongs to the LpxC family. The cofactor is Zn(2+).

The catalysed reaction is a UDP-3-O-[(3R)-3-hydroxyacyl]-N-acetyl-alpha-D-glucosamine + H2O = a UDP-3-O-[(3R)-3-hydroxyacyl]-alpha-D-glucosamine + acetate. The protein operates within glycolipid biosynthesis; lipid IV(A) biosynthesis; lipid IV(A) from (3R)-3-hydroxytetradecanoyl-[acyl-carrier-protein] and UDP-N-acetyl-alpha-D-glucosamine: step 2/6. Catalyzes the hydrolysis of UDP-3-O-myristoyl-N-acetylglucosamine to form UDP-3-O-myristoylglucosamine and acetate, the committed step in lipid A biosynthesis. The sequence is that of UDP-3-O-acyl-N-acetylglucosamine deacetylase from Mannheimia succiniciproducens (strain KCTC 0769BP / MBEL55E).